Consider the following 227-residue polypeptide: tRNA (guanine-N(7)-)-methyltransferase (227 aa).

4 residues coordinate S-adenosyl-L-methionine: E58, E83, D110, and D132. D132 is a catalytic residue. Residues K136, D168, and 205–208 (TRFE) contribute to the substrate site.

The protein belongs to the class I-like SAM-binding methyltransferase superfamily. TrmB family.

It catalyses the reaction guanosine(46) in tRNA + S-adenosyl-L-methionine = N(7)-methylguanosine(46) in tRNA + S-adenosyl-L-homocysteine. It functions in the pathway tRNA modification; N(7)-methylguanine-tRNA biosynthesis. Functionally, catalyzes the formation of N(7)-methylguanine at position 46 (m7G46) in tRNA. The sequence is that of tRNA (guanine-N(7)-)-methyltransferase from Acidithiobacillus ferrooxidans (strain ATCC 23270 / DSM 14882 / CIP 104768 / NCIMB 8455) (Ferrobacillus ferrooxidans (strain ATCC 23270)).